The following is a 99-amino-acid chain: ATP synthase subunit c (99 aa).

Transmembrane regions (helical) follow at residues 23 to 43 and 78 to 98; these read GAGIGYGLVAVGAGLAMIGAL and MGIAETAAIYSLIIAILLIFV.

It belongs to the ATPase C chain family. In terms of assembly, F-type ATPases have 2 components, F(1) - the catalytic core - and F(0) - the membrane proton channel. F(1) has five subunits: alpha(3), beta(3), gamma(1), delta(1), epsilon(1). F(0) has three main subunits: a(1), b(2) and c(10-14). The alpha and beta chains form an alternating ring which encloses part of the gamma chain. F(1) is attached to F(0) by a central stalk formed by the gamma and epsilon chains, while a peripheral stalk is formed by the delta and b chains.

The protein resides in the cell membrane. Its function is as follows. F(1)F(0) ATP synthase produces ATP from ADP in the presence of a proton or sodium gradient. F-type ATPases consist of two structural domains, F(1) containing the extramembraneous catalytic core and F(0) containing the membrane proton channel, linked together by a central stalk and a peripheral stalk. During catalysis, ATP synthesis in the catalytic domain of F(1) is coupled via a rotary mechanism of the central stalk subunits to proton translocation. Functionally, key component of the F(0) channel; it plays a direct role in translocation across the membrane. A homomeric c-ring of between 10-14 subunits forms the central stalk rotor element with the F(1) delta and epsilon subunits. The polypeptide is ATP synthase subunit c (Mycoplasma mobile (strain ATCC 43663 / 163K / NCTC 11711) (Mesomycoplasma mobile)).